Reading from the N-terminus, the 98-residue chain is snRNA-activating protein complex subunit 5 (98 aa).

A disordered region spans residues 75 to 98; the sequence is ALELSTRSHVQEEEEEEEEEEEDS. The segment covering 86–98 has biased composition (acidic residues); sequence EEEEEEEEEEEDS.

Part of the SNAPc complex composed of 5 subunits: SNAPC1, SNAPC2, SNAPC3, SNAPC4 and SNAPC5. SNAPC5 interacts with SNAPC4.

The protein localises to the nucleus. Functionally, part of the SNAPc complex required for the transcription of both RNA polymerase II and III small-nuclear RNA genes. Binds to the proximal sequence element (PSE), a non-TATA-box basal promoter element common to these 2 types of genes. Recruits TBP and BRF2 to the U6 snRNA TATA box. This is snRNA-activating protein complex subunit 5 (SNAPC5) from Bos taurus (Bovine).